Consider the following 424-residue polypeptide: MNSPSSSSSFCSSSSSPSSLVLYSPDTCQVCGQKSHGKHFGAVTCRACAAFFRRCGSANNFKPCRRNMNCEFLKNGWFNCKPCRLKKCQDVGMTIENFQFDRDSFSPKKAKIALENFHNQVPFSIATFTGRSNLIVISAPTEEECIPKCYIDVQFLIDKLSNVLKEGPEVPLHTPNALEKLALGLQIIRGRKRELKLITKLGKEETLGLWQDDMMKVAKWLTYFDDFQQLSHRMRSEMLKGMWKVWSRLETLALTAMGRRLMICQKDMIMTHTEKEQVMAHPKQIEVDISWCSRYTLEQLRFFADSDLDDRNEQVIQAMMELQPTDVELSYMMCQACLHYAGKRYQGEVLEIAERFQETLSNHLHDYYVNRMNMPQYSMRVANLMKINNHIQLDIYRGRVKYDLARVFDVFYLEFSHPEVFIDL.

Positions 1 to 19 (MNSPSSSSSFCSSSSSPSS) are enriched in low complexity. The segment at 1–20 (MNSPSSSSSFCSSSSSPSSL) is disordered. Residues 25–100 (PDTCQVCGQK…VGMTIENFQF (76 aa)) constitute a DNA-binding region (nuclear receptor). NR C4-type zinc fingers lie at residues 28 to 55 (CQVC…FRRC) and 64 to 88 (CRRN…LKKC). One can recognise an NR LBD domain in the interval 169 to 424 (EVPLHTPNAL…FSHPEVFIDL (256 aa)).

The protein belongs to the nuclear hormone receptor family.

It localises to the nucleus. In terms of biological role, orphan nuclear receptor. This Caenorhabditis elegans protein is Nuclear hormone receptor family member nhr-55 (nhr-55).